A 509-amino-acid polypeptide reads, in one-letter code: Maturase K (509 aa).

Belongs to the intron maturase 2 family. MatK subfamily.

It localises to the plastid. It is found in the chloroplast. In terms of biological role, usually encoded in the trnK tRNA gene intron. Probably assists in splicing its own and other chloroplast group II introns. The protein is Maturase K of Solanum bulbocastanum (Wild potato).